Consider the following 232-residue polypeptide: Putative uridine kinase DAS2 (232 aa).

17–24 (GGHATGVG) is a binding site for ATP.

It belongs to the uridine kinase family.

Its subcellular location is the cytoplasm. It localises to the nucleus. The catalysed reaction is uridine + ATP = UMP + ADP + H(+). It catalyses the reaction cytidine + ATP = CMP + ADP + H(+). Its pathway is pyrimidine metabolism; CTP biosynthesis via salvage pathway; CTP from cytidine: step 1/3. It functions in the pathway pyrimidine metabolism; UMP biosynthesis via salvage pathway; UMP from uridine: step 1/1. Functionally, putative uridine kinase identified in a screen for mutants with increased levels of rDNA transcription. The polypeptide is Putative uridine kinase DAS2 (DAS2) (Saccharomyces cerevisiae (strain ATCC 204508 / S288c) (Baker's yeast)).